Reading from the N-terminus, the 920-residue chain is Isoleucine--tRNA ligase (920 aa).

A 'HIGH' region motif is present at residues 57 to 67 (PYANGDIHLGH). Glu-560 is an L-isoleucyl-5'-AMP binding site. The short motif at 601-605 (KMSKS) is the 'KMSKS' region element. An ATP-binding site is contributed by Lys-604. Zn(2+)-binding residues include Cys-890, Cys-893, Cys-910, and Cys-913.

This sequence belongs to the class-I aminoacyl-tRNA synthetase family. IleS type 1 subfamily. In terms of assembly, monomer. Zn(2+) is required as a cofactor.

The protein resides in the cytoplasm. It catalyses the reaction tRNA(Ile) + L-isoleucine + ATP = L-isoleucyl-tRNA(Ile) + AMP + diphosphate. In terms of biological role, catalyzes the attachment of isoleucine to tRNA(Ile). As IleRS can inadvertently accommodate and process structurally similar amino acids such as valine, to avoid such errors it has two additional distinct tRNA(Ile)-dependent editing activities. One activity is designated as 'pretransfer' editing and involves the hydrolysis of activated Val-AMP. The other activity is designated 'posttransfer' editing and involves deacylation of mischarged Val-tRNA(Ile). This chain is Isoleucine--tRNA ligase, found in Caldicellulosiruptor saccharolyticus (strain ATCC 43494 / DSM 8903 / Tp8T 6331).